We begin with the raw amino-acid sequence, 263 residues long: MEIAFDLSTIFTDNIQRLTRTDLLKYGPKRYWAVAQSIDCLGEMSSKFHGWKRVITMYDKIVDHDEEQTTYIMWEKVNGSKSILKGLLRVGYKTLYLTDNEQNQYMEKAMCILDFFVVPTEQRSGNGFKMFDEMLKAENVTVDQCAFDKPSAALQQFLEKYYDRKDLVWQSNKYALCSNFFIGRHPTVPFTPRQTKRASRASSAVSSHASSRNTSPIGRNRPRHDSVADLMRQDMLAGVRAEVDPNSPTGLKNARDFGHRRIW.

The 181-residue stretch at 1–181 (MEIAFDLSTI…NKYALCSNFF (181 aa)) folds into the N-acetyltransferase domain. 115 to 128 (FFVVPTEQRSGNGF) serves as a coordination point for acetyl-CoA. Disordered regions lie at residues 191–223 (TPRQ…NRPR) and 242–263 (EVDP…RRIW). Positions 200–212 (RASSAVSSHASSR) are enriched in low complexity. Positions 253-263 (NARDFGHRRIW) are enriched in basic and acidic residues.

Belongs to the acetyltransferase ATAT1 family. Expressed in touch receptor neurons and in a subset of ciliated neurons, including PDE, ADE, CEP, and OLQ neurons.

It catalyses the reaction L-lysyl-[alpha-tubulin] + acetyl-CoA = N(6)-acetyl-L-lysyl-[alpha-tubulin] + CoA + H(+). Specifically acetylates 'Lys-40' in alpha-tubulin/mec-12 on the lumenal side of microtubules. Promotes microtubule destabilization and accelerates microtubule dynamics; this activity may be independent of acetylation activity. Acetylates alpha-tubulin with a slow enzymatic rate, due to a catalytic site that is not optimized for acetyl transfer. Enters the microtubule through each end and diffuses quickly throughout the lumen of microtubules. Acetylates only long/old microtubules because of its slow acetylation rate since it does not have time to act on dynamically unstable microtubules before the enzyme is released. Required for the maintenance of touch receptor neurons and possibly other type of neurons involved in locomotion. This Caenorhabditis elegans protein is Alpha-tubulin N-acetyltransferase 2 (atat-2).